We begin with the raw amino-acid sequence, 241 residues long: Ubiquinone biosynthesis O-methyltransferase (241 aa).

4 residues coordinate S-adenosyl-L-methionine: arginine 42, glycine 62, aspartate 83, and methionine 127.

Belongs to the methyltransferase superfamily. UbiG/COQ3 family.

The enzyme catalyses a 3-demethylubiquinol + S-adenosyl-L-methionine = a ubiquinol + S-adenosyl-L-homocysteine + H(+). The catalysed reaction is a 3-(all-trans-polyprenyl)benzene-1,2-diol + S-adenosyl-L-methionine = a 2-methoxy-6-(all-trans-polyprenyl)phenol + S-adenosyl-L-homocysteine + H(+). It functions in the pathway cofactor biosynthesis; ubiquinone biosynthesis. Functionally, O-methyltransferase that catalyzes the 2 O-methylation steps in the ubiquinone biosynthetic pathway. The sequence is that of Ubiquinone biosynthesis O-methyltransferase from Pectobacterium atrosepticum (strain SCRI 1043 / ATCC BAA-672) (Erwinia carotovora subsp. atroseptica).